The primary structure comprises 146 residues: MVYQTKRDVPVTLMIVFLILLIQADAIVPFVLGNMRVSGWIIFILLTLLNGLIIWSFIDLKYVLKEHHLIIKAGLIKHQIPYENIDKVVQKKKLWSGFRLIGSRHAITIYYQGGWGHAVISPQKSEEFIHKLKEKNSNIIIFTKSK.

This is an uncharacterized protein from Bacillus subtilis (strain 168).